Here is a 114-residue protein sequence, read N- to C-terminus: uncharacterized protein (114 aa).

Residues 13–30 form a helical membrane-spanning segment; the sequence is LYISAAGIASIYVVKTIV.

The protein localises to the mitochondrion outer membrane. This is an uncharacterized protein from Saccharomyces cerevisiae (strain ATCC 204508 / S288c) (Baker's yeast).